The sequence spans 203 residues: Endo-type membrane-bound lytic murein transglycosylase A (203 aa).

The signal sequence occupies residues M1–G15. The N-palmitoyl cysteine moiety is linked to residue C16. Residue C16 is the site of S-diacylglycerol cysteine attachment.

The protein belongs to the transglycosylase Slt family.

It is found in the cell outer membrane. The enzyme catalyses Endolytic cleavage of the (1-&gt;4)-beta-glycosidic linkage between N-acetylmuramic acid (MurNAc) and N-acetylglucosamine (GlcNAc) residues in peptidoglycan with concomitant formation of a 1,6-anhydrobond in the MurNAc residue.. In terms of biological role, murein-degrading enzyme. May play a role in recycling of muropeptides during cell elongation and/or cell division. Preferentially cleaves at a distance of more than two disaccharide units from the ends of the glycan chain. The protein is Endo-type membrane-bound lytic murein transglycosylase A of Escherichia coli O1:K1 / APEC.